A 139-amino-acid chain; its full sequence is Small ribosomal subunit protein uS12 (139 aa).

Asp-102 carries the 3-methylthioaspartic acid modification.

The protein belongs to the universal ribosomal protein uS12 family. In terms of assembly, part of the 30S ribosomal subunit. Contacts proteins S8 and S17. May interact with IF1 in the 30S initiation complex.

In terms of biological role, with S4 and S5 plays an important role in translational accuracy. Interacts with and stabilizes bases of the 16S rRNA that are involved in tRNA selection in the A site and with the mRNA backbone. Located at the interface of the 30S and 50S subunits, it traverses the body of the 30S subunit contacting proteins on the other side and probably holding the rRNA structure together. The combined cluster of proteins S8, S12 and S17 appears to hold together the shoulder and platform of the 30S subunit. In Bacillus pumilus (strain SAFR-032), this protein is Small ribosomal subunit protein uS12.